The sequence spans 183 residues: GMP synthase [glutamine-hydrolyzing] subunit A (183 aa).

Residues 2 to 183 (KIYVIYNYGQ…YRNFIEICKK (182 aa)) form the Glutamine amidotransferase type-1 domain. C74 (nucleophile) is an active-site residue. Residues H161 and E163 contribute to the active site.

In terms of assembly, heterodimer composed of a glutamine amidotransferase subunit (A) and a GMP-binding subunit (B).

The catalysed reaction is XMP + L-glutamine + ATP + H2O = GMP + L-glutamate + AMP + diphosphate + 2 H(+). The protein operates within purine metabolism; GMP biosynthesis; GMP from XMP (L-Gln route): step 1/1. Catalyzes the synthesis of GMP from XMP. In Archaeoglobus fulgidus (strain ATCC 49558 / DSM 4304 / JCM 9628 / NBRC 100126 / VC-16), this protein is GMP synthase [glutamine-hydrolyzing] subunit A.